The chain runs to 608 residues: Aspartate--tRNA(Asp/Asn) ligase (608 aa).

E187 contributes to the L-aspartate binding site. An aspartate region spans residues 211-214 (QQFK). L-aspartate contacts are provided by R233 and H461. 233–235 (RDE) lines the ATP pocket. An ATP-binding site is contributed by E495. R502 contributes to the L-aspartate binding site. 547-550 (GLDR) provides a ligand contact to ATP.

This sequence belongs to the class-II aminoacyl-tRNA synthetase family. Type 1 subfamily. Homodimer.

It is found in the cytoplasm. It carries out the reaction tRNA(Asx) + L-aspartate + ATP = L-aspartyl-tRNA(Asx) + AMP + diphosphate. Aspartyl-tRNA synthetase with relaxed tRNA specificity since it is able to aspartylate not only its cognate tRNA(Asp) but also tRNA(Asn). Reaction proceeds in two steps: L-aspartate is first activated by ATP to form Asp-AMP and then transferred to the acceptor end of tRNA(Asp/Asn). This Chlorobium phaeobacteroides (strain BS1) protein is Aspartate--tRNA(Asp/Asn) ligase.